The sequence spans 166 residues: CDP-archaeol synthase (166 aa).

5 consecutive transmembrane segments (helical) span residues 1–21 (MPII…LVAN), 55–75 (LLVA…FLGI), 78–98 (IYVS…GAFI), 110–130 (AIGL…IISK), and 131–151 (ISLN…LHIL).

Belongs to the CDP-archaeol synthase family. Requires Mg(2+) as cofactor.

Its subcellular location is the cell membrane. The enzyme catalyses 2,3-bis-O-(geranylgeranyl)-sn-glycerol 1-phosphate + CTP + H(+) = CDP-2,3-bis-O-(geranylgeranyl)-sn-glycerol + diphosphate. The protein operates within membrane lipid metabolism; glycerophospholipid metabolism. Its function is as follows. Catalyzes the formation of CDP-2,3-bis-(O-geranylgeranyl)-sn-glycerol (CDP-archaeol) from 2,3-bis-(O-geranylgeranyl)-sn-glycerol 1-phosphate (DGGGP) and CTP. This reaction is the third ether-bond-formation step in the biosynthesis of archaeal membrane lipids. The chain is CDP-archaeol synthase from Sulfurisphaera tokodaii (strain DSM 16993 / JCM 10545 / NBRC 100140 / 7) (Sulfolobus tokodaii).